The chain runs to 177 residues: Putative pre-16S rRNA nuclease (177 aa).

The segment at 1 to 20 (MVATQQGPDRPGIDDPGRGR) is disordered.

The protein belongs to the YqgF nuclease family.

Its subcellular location is the cytoplasm. Could be a nuclease involved in processing of the 5'-end of pre-16S rRNA. The polypeptide is Putative pre-16S rRNA nuclease (Rhodococcus erythropolis (strain PR4 / NBRC 100887)).